Here is a 404-residue protein sequence, read N- to C-terminus: 1-deoxy-D-xylulose 5-phosphate reductoisomerase (404 aa).

NADPH-binding residues include Thr5, Gly6, Ser7, Ile8, Gly31, Arg32, Asn33, and Asn121. Lys122 contacts 1-deoxy-D-xylulose 5-phosphate. Position 123 (Glu123) interacts with NADPH. Residue Asp147 coordinates Mn(2+). 1-deoxy-D-xylulose 5-phosphate-binding residues include Ser148, Glu149, Ser185, and His208. Glu149 is a binding site for Mn(2+). Gly214 provides a ligand contact to NADPH. 1-deoxy-D-xylulose 5-phosphate is bound by residues Ser221, Asn226, Lys227, and Glu230. Glu230 is a binding site for Mn(2+).

The protein belongs to the DXR family. Requires Mg(2+) as cofactor. It depends on Mn(2+) as a cofactor.

It carries out the reaction 2-C-methyl-D-erythritol 4-phosphate + NADP(+) = 1-deoxy-D-xylulose 5-phosphate + NADPH + H(+). It participates in isoprenoid biosynthesis; isopentenyl diphosphate biosynthesis via DXP pathway; isopentenyl diphosphate from 1-deoxy-D-xylulose 5-phosphate: step 1/6. Its function is as follows. Catalyzes the NADPH-dependent rearrangement and reduction of 1-deoxy-D-xylulose-5-phosphate (DXP) to 2-C-methyl-D-erythritol 4-phosphate (MEP). The chain is 1-deoxy-D-xylulose 5-phosphate reductoisomerase from Prochlorococcus marinus subsp. pastoris (strain CCMP1986 / NIES-2087 / MED4).